Consider the following 286-residue polypeptide: 4-diphosphocytidyl-2-C-methyl-D-erythritol kinase (286 aa).

Lysine 13 is a catalytic residue. 96-106 is an ATP binding site; it reads PMGGGIGGGSS. Aspartate 138 is an active-site residue.

Belongs to the GHMP kinase family. IspE subfamily.

The enzyme catalyses 4-CDP-2-C-methyl-D-erythritol + ATP = 4-CDP-2-C-methyl-D-erythritol 2-phosphate + ADP + H(+). Its pathway is isoprenoid biosynthesis; isopentenyl diphosphate biosynthesis via DXP pathway; isopentenyl diphosphate from 1-deoxy-D-xylulose 5-phosphate: step 3/6. Catalyzes the phosphorylation of the position 2 hydroxy group of 4-diphosphocytidyl-2C-methyl-D-erythritol. This chain is 4-diphosphocytidyl-2-C-methyl-D-erythritol kinase, found in Pseudoalteromonas atlantica (strain T6c / ATCC BAA-1087).